A 470-amino-acid polypeptide reads, in one-letter code: mRNA export factor ICP27 homolog (470 aa).

Disordered regions lie at residues 1–31 and 73–202; these read MALS…TGGD and FSAS…AGDR. Over residues 73–85 the composition is skewed to polar residues; that stretch reads FSASPQRAQPSNP. 2 stretches are compositionally biased toward basic residues: residues 94–107 and 178–187; these read HGRR…RRNN and RVHRNRRRGN. Zn(2+) is bound by residues cysteine 359, histidine 437, cysteine 441, and cysteine 446. The CHC2-type zinc finger occupies 359 to 446; the sequence is CYLSSSGSPT…HKRRCKADTC (88 aa).

It belongs to the HHV-1 ICP27 protein family. As to quaternary structure, homodimer. Homodimerization is required for transactivation. Associates in a complex with RNA, and host export factors NXF1/TAP and ALYREF; these interactions allow nuclear export of viral transcripts. Interacts with three host shuttling SR proteins SRSF1, SRSF3 and SRSF7. Interacts with host SRPK1. Interacts with IE62; this interaction enhances IE62 transactivation.

Its subcellular location is the host cytoplasm. The protein resides in the host nucleus. Multifunctional regulator of the expression of viral genes that mediates nuclear export of viral intronless mRNAs. This immediate early (EI) protein promotes the nuclear export of viral intronless mRNAs by interacting with mRNAs and host NXF1/TAP. This Equine herpesvirus 1 (strain Kentucky A) (EHV-1) protein is mRNA export factor ICP27 homolog.